The following is a 79-amino-acid chain: D-alanyl carrier protein (79 aa).

A Carrier domain is found at 1 to 77 (MTVEEKIIDA…KIVEGVKELQ (77 aa)). An O-(pantetheine 4'-phosphoryl)serine modification is found at Ser35.

Belongs to the DltC family. In terms of processing, 4'-phosphopantetheine is transferred from CoA to a specific serine of apo-DCP.

The protein resides in the cytoplasm. The protein operates within cell wall biogenesis; lipoteichoic acid biosynthesis. In terms of biological role, carrier protein involved in the D-alanylation of lipoteichoic acid (LTA). The loading of thioester-linked D-alanine onto DltC is catalyzed by D-alanine--D-alanyl carrier protein ligase DltA. The DltC-carried D-alanyl group is further transferred to cell membrane phosphatidylglycerol (PG) by forming an ester bond, probably catalyzed by DltD. D-alanylation of LTA plays an important role in modulating the properties of the cell wall in Gram-positive bacteria, influencing the net charge of the cell wall. This chain is D-alanyl carrier protein, found in Streptococcus uberis (strain ATCC BAA-854 / 0140J).